The sequence spans 413 residues: Serine/threonine transporter SstT (413 aa).

9 consecutive transmembrane segments (helical) span residues 22 to 42 (GLLLGLLLALIAPSLQGVLGF), 61 to 81 (AVAPILVFLLVISAIANKQLG), 89 to 109 (IVVLYLLGTFLAALTSVLFSF), 148 to 168 (ALFNANFIGILFWAIGLGIAL), 189 to 209 (IVHFIISFAPIGVFGLVAETL), 224 to 244 (LVVLIGSMLFTAFVINPILVF), 305 to 325 (MAGAAITITVLTLAAVHTLGI), 337 to 357 (VVASICACGASGVAGGSLLLI), and 363 to 383 (LFGIPNDIAAQVIGVGFVIGV).

Belongs to the dicarboxylate/amino acid:cation symporter (DAACS) (TC 2.A.23) family.

It is found in the cell inner membrane. The catalysed reaction is L-serine(in) + Na(+)(in) = L-serine(out) + Na(+)(out). It carries out the reaction L-threonine(in) + Na(+)(in) = L-threonine(out) + Na(+)(out). Functionally, involved in the import of serine and threonine into the cell, with the concomitant import of sodium (symport system). In Histophilus somni (strain 129Pt) (Haemophilus somnus), this protein is Serine/threonine transporter SstT.